The sequence spans 51 residues: MSTTNVQYGLTAQTVLFYSDMVRCGFNWSLAMAQLKELYENNKAIALESAE.

Interacts with host FtsZ.

Functionally, plays a role in the inhibition of host cell division. Interacts with and inhibits the major host cytoskeletal protein in bacterial division FtsZ to confer growth advantage to the phage. In Escherichia coli (Bacteriophage T7), this protein is Gene 0.4 protein.